The sequence spans 302 residues: Dioxygenase olcK (302 aa).

Fe cation-binding residues include His136, Asp138, and His213.

It belongs to the PhyH family. As to quaternary structure, homodimer. The cofactor is Fe cation.

It localises to the peroxisome matrix. It functions in the pathway secondary metabolite biosynthesis; terpenoid biosynthesis. Dioxygenase; part of the gene cluster that mediates the biosynthesis of 15-deoxyoxalicine B. The first step of the pathway is the synthesis of nicotinyl-CoA from nicotinic acid by the nicotinic acid-CoA ligase olcI. Nicotinyl-CoA is then a substrate of polyketide synthase olcA to produce 4-hydroxy-6-(3-pyridinyl)-2H-pyran-2-one (HPPO) which is further prenylated by the polyprenyl transferase olcH to yield geranylgeranyl-HPPO. Geranylgeranyl pyrophosphate is provided by the cluster-specific geranylgeranyl pyrophosphate synthase olcC. The FAD-dependent monooxygenase olcE catalyzes the epoxidation of geranylgeranyl-HPPO and the terpene cyclase olcD catalyzes the cyclization of the terpenoid component, resulting in the formation of the tricyclic terpene moiety seen in predecaturin E. The cytochrome P450 monooxygenase then catalyzes the allylic oxidation of predecaturin E, which is followed by spirocylization with concomitant loss of one molecule of water to form decaturin E. Decaturin E is the substrate of the cytochrome P450 monooxygenase olcJ which hydroxylates it at the C-29 position to form decaturin F. The short-chain dehydrogenase/reductase olcF may catalyze the oxidation of decaturin F to generate the 29-hydroxyl-27-one intermediate, and subsequent hemiacetal formation probably leads to the formation of decaturin C. The dioxygenase olcK may be a peroxisomal enzyme that catalyzes the hydroxylation of decaturin C into decaturin A once decaturin C is shuttled into the peroxisome by the MFS transporter olcL. Finally the cytochrome P450 monooxygenase olcB catalyzes the oxidative rearrangement to yield 15-deoxyoxalicine B. In the absence of olcJ, decaturin E may be shunted to a pathway in which it is oxidized to a ketone, possibly by olcF, to form decaturin D, which undergoes further allylic oxidation to yield decaturin G. Moreover, in the absence of oclK or oclL, oclB can convert decaturin C into 15-deoxyoxalicine A. The chain is Dioxygenase olcK from Penicillium canescens.